A 192-amino-acid chain; its full sequence is ADP-ribosylation factor-like protein 4C (192 aa).

The N-myristoyl glycine moiety is linked to residue Gly-2. GTP-binding positions include 20–27 (GLDSAGKT), 68–72 (DVGGQ), and 127–130 (NKQD).

This sequence belongs to the small GTPase superfamily. Arf family. As to quaternary structure, interacts with CYTH2. Interacts with alpha tubulin; interaction is independent on the ARL4C GTP or GDP binding status. Expressed in several tumor cell lines (at protein level). Expressed in lung, brain, leukocytes and placenta.

Its subcellular location is the cell projection. It is found in the filopodium. The protein localises to the cell membrane. The protein resides in the cytoplasm. Small GTP-binding protein which cycles between an inactive GDP-bound and an active GTP-bound form, and the rate of cycling is regulated by guanine nucleotide exchange factors (GEF) and GTPase-activating proteins (GAP). GTP-binding protein that does not act as an allosteric activator of the cholera toxin catalytic subunit. May be involved in transport between a perinuclear compartment and the plasma membrane, apparently linked to the ABCA1-mediated cholesterol secretion pathway. Recruits CYTH1, CYTH2, CYTH3 and CYTH4 to the plasma membrane in the GDP-bound form. Regulates the microtubule-dependent intracellular vesicular transport from early endosome to recycling endosome process. This chain is ADP-ribosylation factor-like protein 4C (ARL4C), found in Homo sapiens (Human).